The following is a 269-amino-acid chain: Diadenylate cyclase (269 aa).

The DAC domain maps to 109-266; that stretch reads RSGIYDLFAN…GGKMILEIDP (158 aa).

This sequence belongs to the adenylate cyclase family. DacZ subfamily. Mn(2+) is required as a cofactor.

The catalysed reaction is 2 ATP = 3',3'-c-di-AMP + 2 diphosphate. Diadenylate cyclase that catalyzes the condensation of 2 ATP molecules into cyclic di-AMP (c-di-AMP). c-di-AMP is a second messenger for intracellular signal transduction involved in the control of important regulatory processes such as osmoregulation. Is essential for H.volcanii. Overexpression of DacZ leads to cell death, suggesting the need for tight regulation of c-di-AMP levels. Cannot use GTP as substrate. This Haloferax volcanii (strain ATCC 29605 / DSM 3757 / JCM 8879 / NBRC 14742 / NCIMB 2012 / VKM B-1768 / DS2) (Halobacterium volcanii) protein is Diadenylate cyclase.